Consider the following 328-residue polypeptide: Phosphatidylglycerol--prolipoprotein diacylglyceryl transferase (328 aa).

A run of 3 helical transmembrane segments spans residues 15–35 (VIQG…ILIS), 57–77 (IFMF…STLV), and 106–126 (GMAI…TINT). R156 is a binding site for a 1,2-diacyl-sn-glycero-3-phospho-(1'-sn-glycerol). 2 helical membrane-spanning segments follow: residues 242–262 (GFIF…IEYL) and 289–309 (ISMG…WIIV).

The protein belongs to the Lgt family.

Its subcellular location is the cell inner membrane. The catalysed reaction is L-cysteinyl-[prolipoprotein] + a 1,2-diacyl-sn-glycero-3-phospho-(1'-sn-glycerol) = an S-1,2-diacyl-sn-glyceryl-L-cysteinyl-[prolipoprotein] + sn-glycerol 1-phosphate + H(+). It participates in protein modification; lipoprotein biosynthesis (diacylglyceryl transfer). In terms of biological role, catalyzes the transfer of the diacylglyceryl group from phosphatidylglycerol to the sulfhydryl group of the N-terminal cysteine of a prolipoprotein, the first step in the formation of mature lipoproteins. The protein is Phosphatidylglycerol--prolipoprotein diacylglyceryl transferase of Borreliella burgdorferi (strain ATCC 35210 / DSM 4680 / CIP 102532 / B31) (Borrelia burgdorferi).